The following is a 111-amino-acid chain: Nucleoid-associated protein PputW619_3586 (111 aa).

The tract at residues 87 to 111 (EQSSQEKMGGMTAGMQLPPGFKMPF) is disordered.

Belongs to the YbaB/EbfC family. Homodimer.

It is found in the cytoplasm. Its subcellular location is the nucleoid. Binds to DNA and alters its conformation. May be involved in regulation of gene expression, nucleoid organization and DNA protection. The protein is Nucleoid-associated protein PputW619_3586 of Pseudomonas putida (strain W619).